Here is a 419-residue protein sequence, read N- to C-terminus: Enolase (419 aa).

Residue Q161 coordinates (2R)-2-phosphoglycerate. The Proton donor role is filled by E205. Positions 240, 283, and 309 each coordinate Mg(2+). (2R)-2-phosphoglycerate contacts are provided by K334, R363, S364, and K385. K334 acts as the Proton acceptor in catalysis.

The protein belongs to the enolase family. The cofactor is Mg(2+).

The protein resides in the cytoplasm. It localises to the secreted. Its subcellular location is the cell surface. The enzyme catalyses (2R)-2-phosphoglycerate = phosphoenolpyruvate + H2O. It participates in carbohydrate degradation; glycolysis; pyruvate from D-glyceraldehyde 3-phosphate: step 4/5. Its function is as follows. Catalyzes the reversible conversion of 2-phosphoglycerate (2-PG) into phosphoenolpyruvate (PEP). It is essential for the degradation of carbohydrates via glycolysis. The polypeptide is Enolase (Saccharolobus islandicus (strain M.16.27) (Sulfolobus islandicus)).